The chain runs to 368 residues: MSLFGTTSGFGSGGTSMFGSTTTDNHNPMKDIEVTSSPDDSIGCLSFSPPTLPGNFLIAGSWANDVRCWEVQDSGQTIPKAQQMHTGPVLDVCWSDDGSKVFTASCDKTAKMWDLNSNQAIQIAQHDAPVKTVHWIKAPNYSCVMTGSWDKTLKFWDTRSSNPMMVLQLPERCYCADVIYPMAVVATAERGLIVYQLENQPSEFRRIESPLKHQHRCVAIFKDKQNKPTGFALGSIEGRVAIHYINPPNPAKDNFTFKCHRSNGTNTSAPQDIYAVNGIAFHPVHGTLATVGSDGRFSFWDKDARTKLKTSEQLDQPISACCFNHNGNIFAYASSYDWSKGHEFYNPQKKNYIFLRNAAEELKPRNKK.

The segment at T15–V34 is disordered. WD repeat units follow at residues S37–P79, M84–D114, Q125–D157, Q168–R206, H215–F255, Q271–D301, and T310–N346. At T229 the chain carries Phosphothreonine.

This sequence belongs to the WD repeat rae1 family. In terms of assembly, interacts with NUMA1 (via N-terminal end of the coiled-coil domain); this interaction promotes spindle formation in mitosis. Interacts with NUP98. Interacts with MYCBP2. Interacts with USP11.

It localises to the cytoplasm. The protein localises to the nucleus. It is found in the cytoskeleton. Its subcellular location is the spindle pole. Functionally, plays a role in mitotic bipolar spindle formation. Binds mRNA. May function in nucleocytoplasmic transport and in directly or indirectly attaching cytoplasmic mRNPs to the cytoskeleton. In Bos taurus (Bovine), this protein is mRNA export factor (RAE1).